Reading from the N-terminus, the 291-residue chain is Bifunctional protein FolD (291 aa).

NADP(+) is bound by residues 166–168 and I232; that span reads GAS.

Belongs to the tetrahydrofolate dehydrogenase/cyclohydrolase family. As to quaternary structure, homodimer.

It catalyses the reaction (6R)-5,10-methylene-5,6,7,8-tetrahydrofolate + NADP(+) = (6R)-5,10-methenyltetrahydrofolate + NADPH. It carries out the reaction (6R)-5,10-methenyltetrahydrofolate + H2O = (6R)-10-formyltetrahydrofolate + H(+). The protein operates within one-carbon metabolism; tetrahydrofolate interconversion. Its function is as follows. Catalyzes the oxidation of 5,10-methylenetetrahydrofolate to 5,10-methenyltetrahydrofolate and then the hydrolysis of 5,10-methenyltetrahydrofolate to 10-formyltetrahydrofolate. The polypeptide is Bifunctional protein FolD (Photorhabdus laumondii subsp. laumondii (strain DSM 15139 / CIP 105565 / TT01) (Photorhabdus luminescens subsp. laumondii)).